The chain runs to 154 residues: Probable chemoreceptor glutamine deamidase CheD (154 aa).

It belongs to the CheD family.

It catalyses the reaction L-glutaminyl-[protein] + H2O = L-glutamyl-[protein] + NH4(+). Probably deamidates glutamine residues to glutamate on methyl-accepting chemotaxis receptors (MCPs), playing an important role in chemotaxis. This is Probable chemoreceptor glutamine deamidase CheD from Methanococcus vannielii (strain ATCC 35089 / DSM 1224 / JCM 13029 / OCM 148 / SB).